Here is a 212-residue protein sequence, read N- to C-terminus: Peroxisomal membrane protein 4 (212 aa).

Asn57 carries an N-linked (GlcNAc...) asparagine glycan. 2 helical membrane passes run 97 to 117 and 153 to 173; these read GKTYPAHAFLAAFLGGILVFG and WDPFPLLTAVVWGLVLWLFEY. Asn206 is a glycosylation site (N-linked (GlcNAc...) asparagine).

Belongs to the peroxisomal membrane protein PXMP2/4 family. As to quaternary structure, interacts with PEX19. As to expression, expressed in normal prostate epithelial cells, and androgen-sensitive prostate adenocarcinoma cells. Not expressed in androgen-insensitive prostate adenocarcinoma cells.

The protein localises to the peroxisome membrane. In Homo sapiens (Human), this protein is Peroxisomal membrane protein 4 (PXMP4).